The chain runs to 465 residues: UDP-N-acetylmuramate--L-alanine ligase (465 aa).

Residue glycine 114–threonine 120 coordinates ATP.

This sequence belongs to the MurCDEF family.

It is found in the cytoplasm. The catalysed reaction is UDP-N-acetyl-alpha-D-muramate + L-alanine + ATP = UDP-N-acetyl-alpha-D-muramoyl-L-alanine + ADP + phosphate + H(+). It functions in the pathway cell wall biogenesis; peptidoglycan biosynthesis. Cell wall formation. The sequence is that of UDP-N-acetylmuramate--L-alanine ligase from Chlorobium phaeobacteroides (strain BS1).